Here is a 345-residue protein sequence, read N- to C-terminus: MSVTHGKMGLSLTQEILSHLGLANKTAAWGTLGTLRTFLSFSADKDVQRLLKAIAGQGVDRIAILDVLTNRSREQRQLISRAFHERTQQDLLKSLQAALSGNLERIVVALLQPAAHLDARELRTALKGSGSAEDVALEILATRTPPQLQECLAVYKHNFQVDAAEDIKSETRGILRDLLLALAKGGREAYTGIIDYNLAAQDVQALKQAEGPSTERTWVLVFTQRNPEHLVRVLNQYQWYTGHGLEKTVRARFHGAACVALLNLASVIRNTPLYFADKLHQALQETEPNYQALMRILISRSETDLLSIRAEFRKKFGKSLYSSLQDAVKGDCRSALLALCRAEDL.

Annexin repeat units lie at residues 41-112 (FSAD…ALLQ), 113-184 (PAAH…ALAK), 197-266 (NLAA…NLAS), and 270-341 (NTPL…ALCR).

The protein belongs to the annexin family. Homodimer.

Its function is as follows. May act as a low affinity receptor for acetylcholine. The polypeptide is Annexin A9 (ANXA9) (Bos taurus (Bovine)).